A 726-amino-acid chain; its full sequence is NHL repeat-containing protein 2 (726 aa).

6 NHL repeats span residues 212–254, 265–307, 335–369, 409–439, 461–505, and 518–562; these read KLYK…VWKN, NPGR…IDLE, ISSPWDVVFGRSGPEVQRDNILWIAMAGTHQIWAL, FAQPSGLSLASEGPWSCLFVADSESSTVRTV, AFGD…VDPK, and ASNM…LDLE.

As to quaternary structure, monomer.

It is found in the cytoplasm. The protein localises to the cytosol. In terms of biological role, required for normal embryonic development. The protein is NHL repeat-containing protein 2 (NHLRC2) of Bos taurus (Bovine).